The chain runs to 116 residues: T cell receptor alpha variable 19 (116 aa).

The signal sequence occupies residues 1-21 (MLTASLLRAVIASICVVSSMA). The 95-residue stretch at 22 to 116 (QKVTQAQTEI…SAVYFCALSE (95 aa)) folds into the Ig-like domain. Cys43 and Cys112 are disulfide-bonded. Asn96 carries an N-linked (GlcNAc...) asparagine glycan.

Alpha-beta TR is a heterodimer composed of an alpha and beta chain; disulfide-linked. The alpha-beta TR is associated with the transmembrane signaling CD3 coreceptor proteins to form the TR-CD3 (TcR or TCR). The assembly of alpha-beta TR heterodimers with CD3 occurs in the endoplasmic reticulum where a single alpha-beta TR heterodimer associates with one CD3D-CD3E heterodimer, one CD3G-CD3E heterodimer and one CD247 homodimer forming a stable octameric structure. CD3D-CD3E and CD3G-CD3E heterodimers preferentially associate with TR alpha and TR beta chains, respectively. The association of the CD247 homodimer is the last step of TcR assembly in the endoplasmic reticulum and is required for transport to the cell surface.

It localises to the cell membrane. In terms of biological role, v region of the variable domain of T cell receptor (TR) alpha chain that participates in the antigen recognition. Alpha-beta T cell receptors are antigen specific receptors which are essential to the immune response and are present on the cell surface of T lymphocytes. Recognize peptide-major histocompatibility (MH) (pMH) complexes that are displayed by antigen presenting cells (APC), a prerequisite for efficient T cell adaptive immunity against pathogens. Binding of alpha-beta TR to pMH complex initiates TR-CD3 clustering on the cell surface and intracellular activation of LCK that phosphorylates the ITAM motifs of CD3G, CD3D, CD3E and CD247 enabling the recruitment of ZAP70. In turn ZAP70 phosphorylates LAT, which recruits numerous signaling molecules to form the LAT signalosome. The LAT signalosome propagates signal branching to three major signaling pathways, the calcium, the mitogen-activated protein kinase (MAPK) kinase and the nuclear factor NF-kappa-B (NF-kB) pathways, leading to the mobilization of transcription factors that are critical for gene expression and essential for T cell growth and differentiation. The T cell repertoire is generated in the thymus, by V-(D)-J rearrangement. This repertoire is then shaped by intrathymic selection events to generate a peripheral T cell pool of self-MH restricted, non-autoaggressive T cells. Post-thymic interaction of alpha-beta TR with the pMH complexes shapes TR structural and functional avidity. In Homo sapiens (Human), this protein is T cell receptor alpha variable 19.